The following is a 514-amino-acid chain: Threonine synthase (514 aa).

Lys124 is subject to N6-(pyridoxal phosphate)lysine. Gly277, Asn278, Phe279, Asp281, and Thr449 together coordinate pyridoxal 5'-phosphate. A Phosphoserine modification is found at Ser467.

This sequence belongs to the threonine synthase family. Requires pyridoxal 5'-phosphate as cofactor.

The catalysed reaction is O-phospho-L-homoserine + H2O = L-threonine + phosphate. Its pathway is amino-acid biosynthesis; L-threonine biosynthesis; L-threonine from L-aspartate: step 5/5. Catalyzes the gamma-elimination of phosphate from L-phosphohomoserine and the beta-addition of water to produce L-threonine. The chain is Threonine synthase (THR4) from Saccharomyces cerevisiae (strain ATCC 204508 / S288c) (Baker's yeast).